Here is a 614-residue protein sequence, read N- to C-terminus: Spastin (614 aa).

The tract at residues 1 to 45 (MNSPGGRGKKKGSGGPSSPVPPRPPPPCQARSRPAPKPAPPPQSP) is disordered. Positions 1–50 (MNSPGGRGKKKGSGGPSSPVPPRPPPPCQARSRPAPKPAPPPQSPHKRNL) are required for nuclear localization. Over 1-56 (MNSPGGRGKKKGSGGPSSPVPPRPPPPCQARSRPAPKPAPPPQSPHKRNLYYFSYP) the chain is Cytoplasmic. Residues 1-80 (MNSPGGRGKK…LGLLFVWLCQ (80 aa)) are required for interaction with ATL1. Residues 1–192 (MNSPGGRGKK…LVMAKDRLQL (192 aa)) form a required for midbody localization region. The segment at 1–298 (MNSPGGRGKK…STPKTNRTNK (298 aa)) is required for interaction with RTN1. The Nuclear localization signal signature appears at 4 to 11 (PGGRGKKK). Pro residues-rich tracts occupy residues 18–28 (SPVPPRPPPPC) and 35–44 (APKPAPPPQS). The segment at 50–87 (LYYFSYPLFLGFALLRLVAFHLGLLFVWLCQRFSRALM) is required for interaction with SSNA1 and microtubules. Residues 57 to 77 (LFLGFALLRLVAFHLGLLFVW) constitute an intramembrane region (helical). The Nuclear export signal signature appears at 59-67 (LGFALLRLV). The Cytoplasmic segment spans residues 78 to 614 (LCQRFSRALM…WNKDFGDTTV (537 aa)). Residues 110–194 (EAERVRAFHK…MAKDRLQLLE (85 aa)) are sufficient for interaction with CHMP1B. A required for interaction with microtubules region spans residues 112–198 (ERVRAFHKQA…RLQLLEKLQP (87 aa)). An MIT domain is found at 118 to 193 (HKQAFEYISV…VMAKDRLQLL (76 aa)). The segment at 220 to 310 (NGHLQSESGA…TPTTAARKKK (91 aa)) is disordered. The tract at residues 226-614 (ESGAVPKRKD…WNKDFGDTTV (389 aa)) is sufficient for microtubule severing. Residues Ser243 and Ser266 each carry the phosphoserine modification. The required for interaction with microtubules and microtubule severing stretch occupies residues 268-326 (SGLSMVSGVRQGPGSAAATHKSTPKTNRTNKPSTPTTAARKKKDLKNFRNVDSNLANLI). Positions 287–304 (HKSTPKTNRTNKPSTPTT) are enriched in polar residues. A Phosphothreonine modification is found at Thr304. The Nuclear localization signal motif lies at 307–310 (RKKK). An ATP-binding site is contributed by 380-387 (GPPGNGKT). The residue at position 595 (Ser595) is a Phosphoserine.

It belongs to the AAA ATPase family. Spastin subfamily. Homohexamer. Mostly monomeric, but assembles into hexameric structure for short periods of time. Oligomerization seems to be a prerequisite for catalytic activity. Binding to ATP in a cleft between two adjacent subunits stabilizes the homohexameric form. Binds to microtubules at least in part via the alpha-tubulin and beta-tubulin tails. The hexamer adopts a ring conformation through which microtubules pass prior to being severed. Does not interact strongly with tubulin heterodimers. Interacts (via MIT domain) with CHMP1B; the interaction is direct. Interacts with SSNA1. Interacts with ATL1. Interacts with RTN1. Interacts with ZFYVE27. Interacts with REEP1. Interacts (via MIT domain) with IST1.

Its subcellular location is the membrane. It is found in the endoplasmic reticulum. The protein resides in the midbody. The protein localises to the cytoplasm. It localises to the cytoskeleton. Its subcellular location is the microtubule organizing center. It is found in the centrosome. The protein resides in the perinuclear region. The protein localises to the nucleus. It localises to the spindle. Its subcellular location is the cell projection. It is found in the axon. The catalysed reaction is n ATP + n H2O + a microtubule = n ADP + n phosphate + (n+1) alpha/beta tubulin heterodimers.. Its activity is regulated as follows. Allosteric enzyme with a cooperative mechanism; at least two neighbor subunits influence each other strongly in spastin hexamers. Microtubule binding promotes cooperative interactions among spastin subunits. In terms of biological role, ATP-dependent microtubule severing protein that specifically recognizes and cuts microtubules that are polyglutamylated. Preferentially recognizes and acts on microtubules decorated with short polyglutamate tails: severing activity increases as the number of glutamates per tubulin rises from one to eight, but decreases beyond this glutamylation threshold. Severing activity is not dependent on tubulin acetylation or detyrosination. Microtubule severing promotes reorganization of cellular microtubule arrays and the release of microtubules from the centrosome following nucleation. It is critical for the biogenesis and maintenance of complex microtubule arrays in axons, spindles and cilia. SPAST is involved in abscission step of cytokinesis and nuclear envelope reassembly during anaphase in cooperation with the ESCRT-III complex. Recruited at the midbody, probably by IST1, and participates in membrane fission during abscission together with the ESCRT-III complex. Recruited to the nuclear membrane by IST1 and mediates microtubule severing, promoting nuclear envelope sealing and mitotic spindle disassembly during late anaphase. Required for membrane traffic from the endoplasmic reticulum (ER) to the Golgi and endosome recycling. Recruited by IST1 to endosomes and regulates early endosomal tubulation and recycling by mediating microtubule severing. Probably plays a role in axon growth and the formation of axonal branches. This Bos taurus (Bovine) protein is Spastin.